We begin with the raw amino-acid sequence, 387 residues long: Galactokinase (387 aa).

36-39 (EHTD) is a binding site for substrate. ATP-binding positions include Ser-70 and 125–131 (GAGLSSS). Residues Ser-131 and Glu-163 each coordinate Mg(2+). Asp-175 acts as the Proton acceptor in catalysis. Tyr-227 is a binding site for substrate.

It belongs to the GHMP kinase family. GalK subfamily.

It is found in the cytoplasm. It carries out the reaction alpha-D-galactose + ATP = alpha-D-galactose 1-phosphate + ADP + H(+). It functions in the pathway carbohydrate metabolism; galactose metabolism. Functionally, catalyzes the transfer of the gamma-phosphate of ATP to D-galactose to form alpha-D-galactose-1-phosphate (Gal-1-P). In Streptomyces coelicolor (strain ATCC BAA-471 / A3(2) / M145), this protein is Galactokinase.